Reading from the N-terminus, the 346-residue chain is Protein RecA (346 aa).

67-74 contributes to the ATP binding site; it reads GPESSGKT.

The protein belongs to the RecA family.

It is found in the cytoplasm. In terms of biological role, can catalyze the hydrolysis of ATP in the presence of single-stranded DNA, the ATP-dependent uptake of single-stranded DNA by duplex DNA, and the ATP-dependent hybridization of homologous single-stranded DNAs. It interacts with LexA causing its activation and leading to its autocatalytic cleavage. The chain is Protein RecA from Frankia alni (strain DSM 45986 / CECT 9034 / ACN14a).